A 126-amino-acid chain; its full sequence is Holo-[acyl-carrier-protein] synthase (126 aa).

Mg(2+) contacts are provided by Asp8 and Glu56.

This sequence belongs to the P-Pant transferase superfamily. AcpS family. Requires Mg(2+) as cofactor.

The protein resides in the cytoplasm. The catalysed reaction is apo-[ACP] + CoA = holo-[ACP] + adenosine 3',5'-bisphosphate + H(+). Its function is as follows. Transfers the 4'-phosphopantetheine moiety from coenzyme A to a Ser of acyl-carrier-protein. The sequence is that of Holo-[acyl-carrier-protein] synthase from Clostridium tetani (strain Massachusetts / E88).